Here is a 138-residue protein sequence, read N- to C-terminus: Phospholipase A2 EC3 (138 aa).

The N-terminal stretch at 1 to 16 (MRTLWIVAVWLMGVEG) is a signal peptide. 7 disulfide bridges follow: Cys42/Cys131, Cys44/Cys60, Cys59/Cys111, Cys65/Cys138, Cys66/Cys104, Cys73/Cys97, and Cys91/Cys102. Residues Tyr43, Gly45, and Gly47 each contribute to the Ca(2+) site. His63 is an active-site residue. Asp64 is a Ca(2+) binding site. Asp105 is a catalytic residue.

Belongs to the phospholipase A2 family. Group II subfamily. Requires Ca(2+) as cofactor.

Its subcellular location is the secreted. It carries out the reaction a 1,2-diacyl-sn-glycero-3-phosphocholine + H2O = a 1-acyl-sn-glycero-3-phosphocholine + a fatty acid + H(+). In terms of biological role, PA2 catalyzes the calcium-dependent hydrolysis of the 2-acyl groups in 3-sn-phosphoglycerides. In Echis coloratus (Carpet viper), this protein is Phospholipase A2 EC3.